Reading from the N-terminus, the 187-residue chain is MNLQHHFLIAMPSLQDPRFKRSVIYVCEHNEDGAMGLVINKPVEQFTVETVLSKLKIMPQARDPAISLDKPVFAGGPLADDRGFILHTPRKGFGSSIQISPDTMITTSKDVLETLGTPEQPDDVLVALGYAGWEKGQLEQEVLENAWLTIEADTDILFHTPIASRWREAANRLGIDICSIANHAGHA.

The protein belongs to the UPF0301 (AlgH) family.

In Serratia proteamaculans (strain 568), this protein is UPF0301 protein Spro_4027.